We begin with the raw amino-acid sequence, 185 residues long: uncharacterized protein (185 aa).

Residues Leu-39–Ala-177 enclose the Nudix hydrolase domain. Positions Gly-77 to Gly-99 match the Nudix box motif. 2 residues coordinate Mg(2+): Glu-93 and Glu-97.

The protein belongs to the Nudix hydrolase family. Mg(2+) serves as cofactor.

This is an uncharacterized protein from Rhodococcus erythropolis (Arthrobacter picolinophilus).